Here is a 325-residue protein sequence, read N- to C-terminus: Succinylglutamate desuccinylase (325 aa).

Residues His51, Glu54, and His148 each coordinate Zn(2+). Residue Glu211 is part of the active site.

This sequence belongs to the AspA/AstE family. Succinylglutamate desuccinylase subfamily. Zn(2+) is required as a cofactor.

The enzyme catalyses N-succinyl-L-glutamate + H2O = L-glutamate + succinate. It functions in the pathway amino-acid degradation; L-arginine degradation via AST pathway; L-glutamate and succinate from L-arginine: step 5/5. In terms of biological role, transforms N(2)-succinylglutamate into succinate and glutamate. This Photorhabdus laumondii subsp. laumondii (strain DSM 15139 / CIP 105565 / TT01) (Photorhabdus luminescens subsp. laumondii) protein is Succinylglutamate desuccinylase.